The primary structure comprises 128 residues: Ribonuclease P protein component (128 aa).

This sequence belongs to the RnpA family. In terms of assembly, consists of a catalytic RNA component (M1 or rnpB) and a protein subunit.

It carries out the reaction Endonucleolytic cleavage of RNA, removing 5'-extranucleotides from tRNA precursor.. In terms of biological role, RNaseP catalyzes the removal of the 5'-leader sequence from pre-tRNA to produce the mature 5'-terminus. It can also cleave other RNA substrates such as 4.5S RNA. The protein component plays an auxiliary but essential role in vivo by binding to the 5'-leader sequence and broadening the substrate specificity of the ribozyme. The chain is Ribonuclease P protein component from Prochlorococcus marinus (strain AS9601).